Consider the following 429-residue polypeptide: UDP-N-acetylglucosamine 1-carboxyvinyltransferase 2 (429 aa).

Lys-22–Asn-23 is a phosphoenolpyruvate binding site. Arg-93 lines the UDP-N-acetyl-alpha-D-glucosamine pocket. The Proton donor role is filled by Cys-117. Cys-117 carries the 2-(S-cysteinyl)pyruvic acid O-phosphothioketal modification. UDP-N-acetyl-alpha-D-glucosamine is bound by residues Arg-122–Gln-126, Asp-305, and Ile-327.

Belongs to the EPSP synthase family. MurA subfamily.

It is found in the cytoplasm. It carries out the reaction phosphoenolpyruvate + UDP-N-acetyl-alpha-D-glucosamine = UDP-N-acetyl-3-O-(1-carboxyvinyl)-alpha-D-glucosamine + phosphate. The protein operates within cell wall biogenesis; peptidoglycan biosynthesis. Cell wall formation. Adds enolpyruvyl to UDP-N-acetylglucosamine. The polypeptide is UDP-N-acetylglucosamine 1-carboxyvinyltransferase 2 (Bacillus anthracis).